The primary structure comprises 74 residues: uncharacterized protein (74 aa).

It localises to the mitochondrion. This is an uncharacterized protein from Marchantia polymorpha (Common liverwort).